A 103-amino-acid chain; its full sequence is MARSICFFAVAILALMLFAAYDAEAATCKAECPTWDSVCINKKPCVACCKKAKFSDGHCSKILRRCLCTKECVFEKTEATQTETFTKDVNTLAEALLEADMMV.

The first 25 residues, 1-25 (MARSICFFAVAILALMLFAAYDAEA), serve as a signal peptide directing secretion. 5 cysteine pairs are disulfide-bonded: C28–C72, C32–C48, C39–C59, C45–C66, and C49–C68. A propeptide spans 73–103 (VFEKTEATQTETFTKDVNTLAEALLEADMMV) (removed in mature form).

Belongs to the DEFL family. In terms of processing, when compared to other plant defensins, the petunia defensins have an additional fifth disulfide bond. As to expression, petals.

It localises to the secreted. It is found in the vacuole. In terms of biological role, plant defense peptide with antifungal activity against F.oxysporum and B.cinerea. This is Floral defensin-like protein 1 (D1) from Petunia hybrida (Petunia).